Reading from the N-terminus, the 812-residue chain is Plasminogen (812 aa).

An N-terminal signal peptide occupies residues 1–19 (MDHKEVILLFLLLLKPGQG). Residues 20-98 (DSLDGYISTQ…RDVILFEKRV (79 aa)) enclose the PAN domain. Cystine bridges form between cysteine 49/cysteine 73, cysteine 53/cysteine 61, cysteine 103/cysteine 181, cysteine 124/cysteine 164, cysteine 152/cysteine 176, cysteine 185/cysteine 262, cysteine 188/cysteine 316, cysteine 206/cysteine 245, cysteine 234/cysteine 257, cysteine 275/cysteine 352, cysteine 296/cysteine 335, cysteine 324/cysteine 347, cysteine 377/cysteine 454, cysteine 398/cysteine 437, cysteine 426/cysteine 449, cysteine 481/cysteine 560, cysteine 502/cysteine 543, cysteine 531/cysteine 555, cysteine 568/cysteine 687, cysteine 578/cysteine 586, and cysteine 609/cysteine 625. Kringle domains follow at residues 103–181 (CKTG…IPEC), 184–262 (ECMY…IPRC), 275–352 (CLKG…IPSC), 377–454 (CYQS…LKRC), and 481–560 (CMYG…IPLC). In terms of domain architecture, Peptidase S1 spans 582 to 810 (VVGGCVANPH…FVDWIEREMR (229 aa)). Serine 598 is subject to Phosphoserine. Active-site charge relay system residues include histidine 624 and aspartate 667. Serine 690 carries the post-translational modification Phosphoserine. 3 disulfide bridges follow: cysteine 701–cysteine 768, cysteine 731–cysteine 747, and cysteine 758–cysteine 786. Catalysis depends on serine 762, which acts as the Charge relay system.

The protein belongs to the peptidase S1 family. Plasminogen subfamily. In terms of assembly, interacts (both mature PLG and the angiostatin peptide) with AMOT and CSPG4. Interacts (via the Kringle domains) with HRG; the interaction tethers PLG to the cell surface and enhances its activation. Interacts (via Kringle 4 domain) with ADA; the interaction stimulates PLG activation when in complex with DPP4. Angiostatin: Interacts with ATP5F1A; the interaction inhibits most of the angiogenic effects of angiostatin. In the presence of the inhibitor, the activation involves only cleavage after Arg-581, yielding two chains held together by two disulfide bonds. In the absence of the inhibitor, the activation involves additionally the removal of the activation peptide.

The protein localises to the secreted. The enzyme catalyses Preferential cleavage: Lys-|-Xaa &gt; Arg-|-Xaa, higher selectivity than trypsin. Converts fibrin into soluble products.. Its activity is regulated as follows. Converted into plasmin by plasminogen activators, both plasminogen and its activator being bound to fibrin. Cannot be activated with streptokinase. Plasmin dissolves the fibrin of blood clots and acts as a proteolytic factor in a variety of other processes including embryonic development, tissue remodeling, tumor invasion, and inflammation. In ovulation, weakens the walls of the Graafian follicle. It activates the urokinase-type plasminogen activator, collagenases and several complement zymogens, such as C1, C4 and C5. Cleavage of fibronectin and laminin leads to cell detachment and apoptosis. Also cleaves fibrin, thrombospondin and von Willebrand factor. Its role in tissue remodeling and tumor invasion may be modulated by CSPG4. Binds to cells. In terms of biological role, angiostatin is an angiogenesis inhibitor that blocks neovascularization and growth of experimental primary and metastatic tumors in vivo. The sequence is that of Plasminogen (Plg) from Mus musculus (Mouse).